A 260-amino-acid chain; its full sequence is MLAVLSPAKSLDYESPLTTSRFSEPALMHESALLIEQLRQFAPADIASLMHLSDKLAGLNVARYAQWEPVATPQNARPAVLAFNGDVYSGLAAQDFDDADLDVAQQHIRILSGLYGLLRPLDLLQPYRLEMGTKLGNPRGKDLYAFWGDIITGHLNQALTEQGDNVLLNLASDEYFKSVNVKRLAGRVITPVFQDEKNGKYKIISFYAKKARGLMARYLVKERISKPEQLLDFTVAGYGYCPELSTENKLVFRRPEDLSQ.

This sequence belongs to the UPF0246 family.

The sequence is that of UPF0246 protein Tola_0968 from Tolumonas auensis (strain DSM 9187 / NBRC 110442 / TA 4).